The primary structure comprises 431 residues: STE20-related kinase adapter protein alpha (431 aa).

Residues S2 and S46 each carry the phosphoserine modification. A Protein kinase domain is found at 69-379 (YELLTVIGKG…ASTLLNHSFF (311 aa)). The tract at residues 310 to 347 (LTMSPSRSVANSGLSDSLTTSTPRPSNGDSPSHPYHRT) is disordered. Polar residues predominate over residues 312–339 (MSPSRSVANSGLSDSLTTSTPRPSNGDS). A phosphothreonine; by LKB1 mark is found at T329 and T419.

The protein belongs to the protein kinase superfamily. STE Ser/Thr protein kinase family. STE20 subfamily. Component of a trimeric complex composed of STK11/LKB1, STRAD (STRADA or STRADB) and CAB39/MO25 (CAB39/MO25alpha or CAB39L/MO25beta): the complex tethers STK11/LKB1 in the cytoplasm and stimulates its catalytic activity.

Its subcellular location is the nucleus. The protein resides in the cytoplasm. Its function is as follows. Pseudokinase which, in complex with CAB39/MO25 (CAB39/MO25alpha or CAB39L/MO25beta), binds to and activates STK11/LKB1. Adopts a closed conformation typical of active protein kinases and binds STK11/LKB1 as a pseudosubstrate, promoting conformational change of STK11/LKB1 in an active conformation. This Homo sapiens (Human) protein is STE20-related kinase adapter protein alpha (STRADA).